The chain runs to 130 residues: Small ribosomal subunit protein uS11c (130 aa).

The protein belongs to the universal ribosomal protein uS11 family. Part of the 30S ribosomal subunit.

It is found in the plastid. It localises to the chloroplast. The protein is Small ribosomal subunit protein uS11c of Drimys granadensis.